Here is a 212-residue protein sequence, read N- to C-terminus: Troponin I, cardiac muscle (212 aa).

Positions 1–11 (MADRSGGSTAG) are enriched in polar residues. Residues 1–45 (MADRSGGSTAGDTVPAPPPVRRRSSANYRAYATEPHAKKKSKISA) are disordered. At Ala-2 the chain carries N-acetylalanine. Ser-5 carries the phosphoserine modification. A phosphoserine; by PKA and PKD/PRKD1 mark is found at Ser-24 and Ser-25. Tyr-28 is modified (phosphotyrosine). Thr-33 carries the phosphothreonine; by STK4/MST1 modification. Residues 34–81 (EPHAKKKSKISASRKLQLKTLMLQIAKQELEREAEERRGEKGRALSTR) form an involved in binding TNC region. Phosphoserine; by PKC/PRKCE occurs at positions 44 and 46. The residue at position 53 (Thr-53) is a Phosphothreonine; by STK4/MST1. Residue Ser-79 is modified to Phosphoserine. Thr-80 is subject to Phosphothreonine. An involved in binding TNC and actin region spans residues 131-151 (NQKIFDLRGKFKRPTLRRVRI). The residue at position 145 (Thr-145) is a Phosphothreonine; by STK4/MST1. A Phosphoserine; by PAK3 modification is found at Ser-152. Residue Thr-183 is modified to Phosphothreonine. Ser-201 is modified (phosphoserine).

It belongs to the troponin I family. Interacts with TRIM63. Binds to actin and tropomyosin. Interacts with STK4/MST1. Post-translationally, phosphorylated at Ser-24 and Ser-25 by PRKD1; phosphorylation reduces myofilament calcium sensitivity. Phosphorylated preferentially at Thr-33. Phosphorylation by STK4/MST1 alters its binding affinity to TNNC1 (cardiac Tn-C) and TNNT2 (cardiac Tn-T). Phosphorylated at Ser-44 and Ser-46 by PRKCE; phosphorylation increases myocardium contractile dysfunction.

In terms of biological role, troponin I is the inhibitory subunit of troponin, the thin filament regulatory complex which confers calcium-sensitivity to striated muscle actomyosin ATPase activity. The chain is Troponin I, cardiac muscle (TNNI3) from Bos taurus (Bovine).